Here is a 180-residue protein sequence, read N- to C-terminus: Chorion protein S19 (180 aa).

A signal peptide spans 1 to 21 (MNTFATLAVLFCACLIGNCHG).

Belongs to the chorion protein S19 family.

It localises to the secreted. Chorion membrane (egg shell) protein; plays a role in protecting the egg from the environment. In Drosophila subobscura (Fruit fly), this protein is Chorion protein S19 (Cp19).